The chain runs to 546 residues: Probable malate:quinone oxidoreductase (546 aa).

It belongs to the MQO family. FAD serves as cofactor.

It carries out the reaction (S)-malate + a quinone = a quinol + oxaloacetate. The protein operates within carbohydrate metabolism; tricarboxylic acid cycle; oxaloacetate from (S)-malate (quinone route): step 1/1. The sequence is that of Probable malate:quinone oxidoreductase from Acinetobacter baumannii (strain ACICU).